The primary structure comprises 344 residues: DNA-directed RNA polymerase subunit alpha (344 aa).

The interval 1-246 (MPMERFLKDF…EFLFPLVDFE (246 aa)) is alpha N-terminal domain (alpha-NTD). The segment at 259–344 (ESSNLLDMSI…VLSKNVKISE (86 aa)) is alpha C-terminal domain (alpha-CTD).

It belongs to the RNA polymerase alpha chain family. As to quaternary structure, homodimer. The RNAP catalytic core consists of 2 alpha, 1 beta, 1 beta' and 1 omega subunit. When a sigma factor is associated with the core the holoenzyme is formed, which can initiate transcription.

The enzyme catalyses RNA(n) + a ribonucleoside 5'-triphosphate = RNA(n+1) + diphosphate. Its function is as follows. DNA-dependent RNA polymerase catalyzes the transcription of DNA into RNA using the four ribonucleoside triphosphates as substrates. The protein is DNA-directed RNA polymerase subunit alpha of Borreliella afzelii (strain PKo) (Borrelia afzelii).